We begin with the raw amino-acid sequence, 157 residues long: Peptide methionine sulfoxide reductase MsrA (157 aa).

Cysteine 10 is a catalytic residue.

It belongs to the MsrA Met sulfoxide reductase family.

It catalyses the reaction L-methionyl-[protein] + [thioredoxin]-disulfide + H2O = L-methionyl-(S)-S-oxide-[protein] + [thioredoxin]-dithiol. The enzyme catalyses [thioredoxin]-disulfide + L-methionine + H2O = L-methionine (S)-S-oxide + [thioredoxin]-dithiol. In terms of biological role, has an important function as a repair enzyme for proteins that have been inactivated by oxidation. Catalyzes the reversible oxidation-reduction of methionine sulfoxide in proteins to methionine. The chain is Peptide methionine sulfoxide reductase MsrA from Clostridium botulinum (strain Loch Maree / Type A3).